The following is a 133-amino-acid chain: Small ribosomal subunit protein uS8 (133 aa).

The protein belongs to the universal ribosomal protein uS8 family. Part of the 30S ribosomal subunit.

One of the primary rRNA binding proteins, it binds directly to 16S rRNA central domain where it helps coordinate assembly of the platform of the 30S subunit. This Saccharolobus islandicus (strain L.S.2.15 / Lassen #1) (Sulfolobus islandicus) protein is Small ribosomal subunit protein uS8.